The following is a 1277-amino-acid chain: Y' element ATP-dependent helicase YEL077C (1277 aa).

The Helicase ATP-binding domain occupies 222–399 (EIYMADTPSV…LQRIGLTGLA (178 aa)). Residue 235–242 (APPGYGKT) coordinates ATP. The short motif at 345-348 (DEFH) is the DEAH box element. Residues 454–605 (ALKLLLALFE…EFYGLESKKG (152 aa)) form the Helicase C-terminal domain. Disordered stretches follow at residues 696–763 (NVRT…NATT) and 775–895 (TTKS…NRFH). Residues 775–878 (TTKSINSSTN…ATTTESTNAS (104 aa)) show a composition bias toward low complexity. Basic and acidic residues predominate over residues 879-895 (AKEDANKDGNAEDNRFH).

This sequence belongs to the helicase family. Yeast subtelomeric Y' repeat subfamily.

Catalyzes DNA unwinding and is involved in telomerase-independent telomere maintenance. This Saccharomyces cerevisiae (strain ATCC 204508 / S288c) (Baker's yeast) protein is Y' element ATP-dependent helicase YEL077C.